Here is a 587-residue protein sequence, read N- to C-terminus: Estrogen receptor (587 aa).

The modulating (transactivation AF-1) stretch occupies residues 1–176 (MTLHTKTSGV…SMESTKETRY (176 aa)). 2 consecutive NR C4-type zinc fingers follow at residues 177–197 (CAVC…CEGC) and 213–237 (CPAT…LRKC). A DNA-binding region (nuclear receptor) is located at residues 177-242 (CAVCNDYASG…RLRKCYEVGM (66 aa)). The interval 243-302 (MKGGIRKDRRGGRVMKQKRQREEQDSRNGEASSTELRAPTLWASPLVVKHNKKNSPALSL) is hinge. The tract at residues 248 to 277 (RKDRRGGRVMKQKRQREEQDSRNGEASSTE) is disordered. Positions 249–261 (KDRRGGRVMKQKR) are enriched in basic residues. One can recognise an NR LBD domain in the interval 303 to 539 (TAEQMVSALL…DLLLEMLDAH (237 aa)). Residues 303–587 (TAEQMVSALL…KEEENMQNTL (285 aa)) form a transactivation AF-2 region.

Belongs to the nuclear hormone receptor family. NR3 subfamily. As to quaternary structure, binds DNA as a homodimer. Can form a heterodimer with ER-beta.

The protein resides in the nucleus. Its function is as follows. The steroid hormones and their receptors are involved in the regulation of eukaryotic gene expression and affect cellular proliferation and differentiation in target tissues. The protein is Estrogen receptor (ESR1) of Taeniopygia guttata (Zebra finch).